Reading from the N-terminus, the 476-residue chain is Ribulose bisphosphate carboxylase large chain (476 aa).

Residues 1 to 2 (MS) constitute a propeptide that is removed on maturation. At Pro3 the chain carries N-acetylproline. At Lys14 the chain carries N6,N6,N6-trimethyllysine. Substrate contacts are provided by Asn123 and Thr173. Lys175 functions as the Proton acceptor in the catalytic mechanism. Substrate is bound at residue Lys177. Mg(2+)-binding residues include Lys201, Asp203, and Glu204. Lys201 is subject to N6-carboxylysine. His294 acts as the Proton acceptor in catalysis. Positions 295, 327, and 379 each coordinate substrate.

It belongs to the RuBisCO large chain family. Type I subfamily. Heterohexadecamer of 8 large chains and 8 small chains; disulfide-linked. The disulfide link is formed within the large subunit homodimers. Mg(2+) is required as a cofactor. The disulfide bond which can form in the large chain dimeric partners within the hexadecamer appears to be associated with oxidative stress and protein turnover.

It is found in the plastid. It localises to the chloroplast. It carries out the reaction 2 (2R)-3-phosphoglycerate + 2 H(+) = D-ribulose 1,5-bisphosphate + CO2 + H2O. The enzyme catalyses D-ribulose 1,5-bisphosphate + O2 = 2-phosphoglycolate + (2R)-3-phosphoglycerate + 2 H(+). Its function is as follows. RuBisCO catalyzes two reactions: the carboxylation of D-ribulose 1,5-bisphosphate, the primary event in carbon dioxide fixation, as well as the oxidative fragmentation of the pentose substrate in the photorespiration process. Both reactions occur simultaneously and in competition at the same active site. The chain is Ribulose bisphosphate carboxylase large chain from Brachypodium distachyon (Purple false brome).